The primary structure comprises 342 residues: Protein pelota homolog (342 aa).

It belongs to the eukaryotic release factor 1 family. Pelota subfamily. In terms of assembly, monomer. The cofactor is a divalent metal cation.

The protein resides in the cytoplasm. In terms of biological role, may function in recognizing stalled ribosomes, interact with stem-loop structures in stalled mRNA molecules, and effect endonucleolytic cleavage of the mRNA. May play a role in the release non-functional ribosomes and degradation of damaged mRNAs. Has endoribonuclease activity. The sequence is that of Protein pelota homolog from Methanocorpusculum labreanum (strain ATCC 43576 / DSM 4855 / Z).